Here is a 1493-residue protein sequence, read N- to C-terminus: MSIMSISLHSASSDTVSLTSRRTISTSKHWAAIFDERIYQICNIVHPGLPIDNAAVEHIRYFLQSIVFELIEARATSVVEVDKTAKKLFAFGLQTVCKEAWDNMHQQLQKHKYQKALKTVLESQHRLAAVIKETLGPREKEKKDREKKEIERIACYIYYACESVTEDVLRLTGNYVKNIRNSEQKITMANLDVAMNGDKALMELRTKLRNEEEAESPGGFGFLSEFEEFVAEETEEKTLSNSQTYESVAVDFLRDERRFIRELNRINVFRRRIESVAATDVDKQIVCNLFGNLTEIHDLALKIERTLEDAIELSDTQCIGMGIWEHGEAYEFDTYTFYIRRDGGEMNETRHATYVINDNIKALLESERFASLFQSGEHYLGSSLDGQSFRLAVQYVLPQLLHIPIFHIYQYHEYITRLHQLSSSEEDRRDLNDCRSAFERVVGCVSDMSPELKTKITQFLDQQAKSEKIYNVKRLNEIQSSIDGFTGSPIGKTCNELEKDGDLGMIRPSLQFSSEITKNKKWKTERFVYIFDQMIVLCKRHRNTLKFKDRLAVHSIDVFDIPDSEVTNCFKIESHDKSSLPKIYHFVCKNPEEKRQWMAVLVKVTTKSVLDRILDNHEKEEAKRIPLVVPGPDQYRFSEPDTEDNISFEDYTSSSGIPVIKCGTVLKLIERLTYHSYTDSKYILTFLISYRSFCTPNDLFSLLLERFNIPTPKKLQQPKQGGGPLAGRYDTVQSHGLSAISSSSCINPLCEQKFRKEFQQPIQLRVLSVINQWVKLHWYDFQCDPVLLDALELFLNRCCDPREGLSKQHKKFCKTILALIEKRVKNPPGIMQQPNENGDKGAADEGHVNSAFVFGDDQQHPPQHQVYTNESPKETNQVLWHTAQKGDVDHYDLLTLHPIEIGRQLTLLHSDLYRAIQPIELVEAAWTKAEKWRKSPQLLRLTDHSTLLTYWVSRSIVETESLEERMAMFNRVLEVMSVFEELHNFTGLVAFYSALNSSCIFRLKWCWDGLDNEKKKCFDRFNTLCERRWQEMQKRLSSINPPCIPFFGHYLSNIYFLEQGNSTFVNKSPPHGAAGAQKQQKDDLKASDPENSNKQFKQLVSFLKLRKISNVIREIQIFQDQRYSLTLEPTIRQFFESINPKNDFKSNEDLEEYLYNKSLEIQPKGLDTPTAELKPKHNASTLRSPGVKPPKAAGNHYSANHPIGLHLHSQNSHSAPHAMSSQSSTVPNTPLSAHETKRSLSHNQDDAPLQQFVDIRFERKGTHPKIPVLQPPPLLPRSSRANQSNSVSLPPTTQAPMPPAPKSSGMMSTATSPTTLTTTTTPSSAGGPPPKLHPRRMTQQPMSPLAKSPLTPSRDNSSPSAFQFPVVYEASTAPPLPPRPSTSSDVSSSPSTSGSTSSATKENQEQLRVIFDREESHSPTVRLSVPLPPALPPPRGSSVFRAPPPLPPKSNRHNSNSPTLSSEQPFEDPMSPSIFVNTPPPPLPPKTYRSSNK.

The region spanning 244–448 (TYESVAVDFL…ERVVGCVSDM (205 aa)) is the DH domain. One can recognise a PH domain in the interval 496–606 (ELEKDGDLGM…WMAVLVKVTT (111 aa)). The 169-residue stretch at 656-824 (GIPVIKCGTV…TILALIEKRV (169 aa)) folds into the N-terminal Ras-GEF domain. In terms of domain architecture, Ras-GEF spans 897–1164 (HPIEIGRQLT…YNKSLEIQPK (268 aa)). 3 disordered regions span residues 1067-1091 (KSPPHGAAGAQKQQKDDLKASDPEN), 1165-1248 (GLDT…DDAP), and 1263-1493 (HPKI…SSNK). Positions 1079 to 1088 (QQKDDLKASD) are enriched in basic and acidic residues. Composition is skewed to polar residues over residues 1208–1231 (HSQNSHSAPHAMSSQSSTVPNTPL) and 1279–1289 (SRANQSNSVSL). Positions 1308–1326 (STATSPTTLTTTTTPSSAG) are enriched in low complexity. Polar residues predominate over residues 1350–1361 (LTPSRDNSSPSA). A compositionally biased stretch (low complexity) spans 1381–1400 (STSSDVSSSPSTSGSTSSAT). A compositionally biased stretch (basic and acidic residues) spans 1402-1417 (ENQEQLRVIFDREESH). Pro residues predominate over residues 1426–1435 (PLPPALPPPR). Over residues 1453-1464 (HNSNSPTLSSEQ) the composition is skewed to polar residues.

In terms of assembly, interacts with cmd-1 in the presence of Ca(2+).

Promotes the exchange of Ras-bound GDP by GTP. May regulate signaling pathways downstream of receptor tyrosine kinase, egl-15 and let-23. Required for larval and male spicule development, fluid homeostasis, vulva induction, spermatogenesis, and oogenesis by promoting meiosis prophase exit during oocyte maturation. Required for the delamination of G1 cell by promoting the loss of cell junctions and detachment from the excretory system during larval development. Plays a role in nicotinic acetylcholine receptor (nAChR)-mediated sensitivity to nicotine. Regulates synaptic levels of nAchR subunit lev-1 in the nerve cord. In Caenorhabditis elegans, this protein is Son of sevenless homolog.